A 366-amino-acid polypeptide reads, in one-letter code: Putative agmatine deiminase (366 aa).

Cys-357 (amidino-cysteine intermediate) is an active-site residue.

Belongs to the agmatine deiminase family.

It catalyses the reaction agmatine + H2O = N-carbamoylputrescine + NH4(+). This is Putative agmatine deiminase from Lactococcus lactis subsp. lactis (strain IL1403) (Streptococcus lactis).